The chain runs to 147 residues: D-aminoacyl-tRNA deacylase (147 aa).

The Gly-cisPro motif, important for rejection of L-amino acids signature appears at 136–137; it reads GP.

This sequence belongs to the DTD family. As to quaternary structure, homodimer.

It is found in the cytoplasm. The catalysed reaction is glycyl-tRNA(Ala) + H2O = tRNA(Ala) + glycine + H(+). The enzyme catalyses a D-aminoacyl-tRNA + H2O = a tRNA + a D-alpha-amino acid + H(+). Its function is as follows. An aminoacyl-tRNA editing enzyme that deacylates mischarged D-aminoacyl-tRNAs. Also deacylates mischarged glycyl-tRNA(Ala), protecting cells against glycine mischarging by AlaRS. Acts via tRNA-based rather than protein-based catalysis; rejects L-amino acids rather than detecting D-amino acids in the active site. By recycling D-aminoacyl-tRNA to D-amino acids and free tRNA molecules, this enzyme counteracts the toxicity associated with the formation of D-aminoacyl-tRNA entities in vivo and helps enforce protein L-homochirality. The polypeptide is D-aminoacyl-tRNA deacylase (Streptococcus uberis (strain ATCC BAA-854 / 0140J)).